A 375-amino-acid chain; its full sequence is Chaperone protein DnaJ (375 aa).

A J domain is found at 5 to 70; it reads DYYEVLGVSR…EKRARYDRFG (66 aa). The CR-type zinc finger occupies 136–214; that stretch reads GDEVTLRIPK…CRGAGQVQDI (79 aa). Zn(2+) is bound by residues Cys-149, Cys-152, Cys-166, Cys-169, Cys-188, Cys-191, Cys-202, and Cys-205. 4 CXXCXGXG motif repeats span residues 149-156, 166-173, 188-195, and 202-209; these read CPDCSGSG, CPQCGGSG, CSACRGEG, and CPRCRGAG.

It belongs to the DnaJ family. As to quaternary structure, homodimer. Zn(2+) is required as a cofactor.

Its subcellular location is the cytoplasm. Functionally, participates actively in the response to hyperosmotic and heat shock by preventing the aggregation of stress-denatured proteins and by disaggregating proteins, also in an autonomous, DnaK-independent fashion. Unfolded proteins bind initially to DnaJ; upon interaction with the DnaJ-bound protein, DnaK hydrolyzes its bound ATP, resulting in the formation of a stable complex. GrpE releases ADP from DnaK; ATP binding to DnaK triggers the release of the substrate protein, thus completing the reaction cycle. Several rounds of ATP-dependent interactions between DnaJ, DnaK and GrpE are required for fully efficient folding. Also involved, together with DnaK and GrpE, in the DNA replication of plasmids through activation of initiation proteins. In Oleidesulfovibrio alaskensis (strain ATCC BAA-1058 / DSM 17464 / G20) (Desulfovibrio alaskensis), this protein is Chaperone protein DnaJ.